The following is a 185-amino-acid chain: Ribose 1,5-bisphosphate phosphokinase PhnN (185 aa).

13 to 20 (GPSGAGKD) contacts ATP.

Belongs to the ribose 1,5-bisphosphokinase family.

It catalyses the reaction alpha-D-ribose 1,5-bisphosphate + ATP = 5-phospho-alpha-D-ribose 1-diphosphate + ADP. The protein operates within metabolic intermediate biosynthesis; 5-phospho-alpha-D-ribose 1-diphosphate biosynthesis; 5-phospho-alpha-D-ribose 1-diphosphate from D-ribose 5-phosphate (route II): step 3/3. In terms of biological role, catalyzes the phosphorylation of ribose 1,5-bisphosphate to 5-phospho-D-ribosyl alpha-1-diphosphate (PRPP). This Chromobacterium violaceum (strain ATCC 12472 / DSM 30191 / JCM 1249 / CCUG 213 / NBRC 12614 / NCIMB 9131 / NCTC 9757 / MK) protein is Ribose 1,5-bisphosphate phosphokinase PhnN.